The following is a 153-amino-acid chain: Cytochrome c-type biogenesis protein CcmE (153 aa).

Over 1–7 (MKPRHKR) the chain is Cytoplasmic. Residues 8–28 (LAIAGGVLVAVGAIATLVLNA) traverse the membrane as a helical; Signal-anchor for type II membrane protein segment. Topologically, residues 29 to 153 (FQSNLVFFYS…SSQAATGDPR (125 aa)) are periplasmic. Heme contacts are provided by H120 and Y124. Residues 130–153 (AEALKRAKEGGQMQSSQAATGDPR) form a disordered region. Residues 141–153 (QMQSSQAATGDPR) show a composition bias toward polar residues.

The protein belongs to the CcmE/CycJ family.

The protein resides in the cell inner membrane. Heme chaperone required for the biogenesis of c-type cytochromes. Transiently binds heme delivered by CcmC and transfers the heme to apo-cytochromes in a process facilitated by CcmF and CcmH. This is Cytochrome c-type biogenesis protein CcmE from Leptothrix cholodnii (strain ATCC 51168 / LMG 8142 / SP-6) (Leptothrix discophora (strain SP-6)).